A 483-amino-acid chain; its full sequence is ATP synthase subunit beta (483 aa).

169 to 176 (GGAGVGKT) is an ATP binding site.

Belongs to the ATPase alpha/beta chains family. In terms of assembly, F-type ATPases have 2 components, CF(1) - the catalytic core - and CF(0) - the membrane proton channel. CF(1) has five subunits: alpha(3), beta(3), gamma(1), delta(1), epsilon(1). CF(0) has three main subunits: a(1), b(2) and c(9-12). The alpha and beta chains form an alternating ring which encloses part of the gamma chain. CF(1) is attached to CF(0) by a central stalk formed by the gamma and epsilon chains, while a peripheral stalk is formed by the delta and b chains.

It localises to the cell membrane. It carries out the reaction ATP + H2O + 4 H(+)(in) = ADP + phosphate + 5 H(+)(out). Produces ATP from ADP in the presence of a proton gradient across the membrane. The catalytic sites are hosted primarily by the beta subunits. The polypeptide is ATP synthase subunit beta (Corynebacterium glutamicum (strain R)).